Reading from the N-terminus, the 393-residue chain is Putative amino-acid ABC transporter permease protein YhdX (393 aa).

The next 8 helical transmembrane spans lie at 21 to 41, 92 to 112, 128 to 148, 180 to 200, 219 to 239, 256 to 276, 333 to 353, and 363 to 383; these read AWLF…WLFH, LLVS…IGLA, IEIF…FAVL, DGFI…VGLF, IAAV…GAAL, VLIP…SAFI, SSLA…GTVL, and IAMT…LMNI. The ABC transmembrane type-1 domain maps to 88–381; sequence LLNTLLVSAL…IISLTISLLM (294 aa).

The protein belongs to the binding-protein-dependent transport system permease family. HisMQ subfamily.

The protein localises to the cell inner membrane. Functionally, probably part of the binding-protein-dependent transport system YdhWXYZ for an amino acid; probably responsible for the translocation of the substrate across the membrane. The protein is Putative amino-acid ABC transporter permease protein YhdX (yhdX) of Escherichia coli (strain K12).